A 510-amino-acid polypeptide reads, in one-letter code: NAD(P)H-quinone oxidoreductase subunit 2 A, chloroplastic (510 aa).

The next 13 helical transmembrane spans lie at 26–46 (LFDG…ILLL), 57–77 (ISWF…ALLF), 99–119 (IFQF…VEYI), 124–144 (MAIT…MFLC), 149–169 (LITI…LSGY), 183–203 (YLLM…WLYG), 227–247 (PGIL…LSPA), 295–315 (WHLL…LIAI), 323–343 (MLAY…IVGD), 354–374 (YMLF…SFGL), 395–415 (ALSL…SGFF), 418–438 (LHLF…IGLL), and 482–502 (LSMI…NPII).

This sequence belongs to the complex I subunit 2 family. NDH is composed of at least 16 different subunits, 5 of which are encoded in the nucleus.

Its subcellular location is the plastid. The protein resides in the chloroplast thylakoid membrane. It catalyses the reaction a plastoquinone + NADH + (n+1) H(+)(in) = a plastoquinol + NAD(+) + n H(+)(out). The catalysed reaction is a plastoquinone + NADPH + (n+1) H(+)(in) = a plastoquinol + NADP(+) + n H(+)(out). Functionally, NDH shuttles electrons from NAD(P)H:plastoquinone, via FMN and iron-sulfur (Fe-S) centers, to quinones in the photosynthetic chain and possibly in a chloroplast respiratory chain. The immediate electron acceptor for the enzyme in this species is believed to be plastoquinone. Couples the redox reaction to proton translocation, and thus conserves the redox energy in a proton gradient. The chain is NAD(P)H-quinone oxidoreductase subunit 2 A, chloroplastic from Glycine max (Soybean).